The primary structure comprises 650 residues: Protein kinase domain-containing protein ppk38 (650 aa).

Residues 33–315 (VTVKRYLAEG…MRNVPIHIYD (283 aa)) form the Protein kinase domain. Disordered regions lie at residues 344-442 (IHQS…PTTP), 517-571 (KVAA…PTNM), and 591-616 (RRVS…EKPM). 2 stretches are compositionally biased toward polar residues: residues 369–415 (NVNS…NFRV) and 533–554 (SVEN…SSNA).

The sequence is that of Protein kinase domain-containing protein ppk38 (ppk38) from Schizosaccharomyces pombe (strain 972 / ATCC 24843) (Fission yeast).